Consider the following 293-residue polypeptide: Fructose-bisphosphate aldolase (293 aa).

Ser-50 is a binding site for D-glyceraldehyde 3-phosphate. Asp-85 serves as the catalytic Proton donor. Residues His-86, Asp-106, Glu-136, and His-178 each contribute to the Zn(2+) site. Gly-179 provides a ligand contact to dihydroxyacetone phosphate. His-208 lines the Zn(2+) pocket. Dihydroxyacetone phosphate contacts are provided by residues 209–211 (GGS) and 230–233 (NVNT).

This sequence belongs to the class II fructose-bisphosphate aldolase family. It depends on Zn(2+) as a cofactor.

The catalysed reaction is beta-D-fructose 1,6-bisphosphate = D-glyceraldehyde 3-phosphate + dihydroxyacetone phosphate. It participates in carbohydrate degradation; glycolysis; D-glyceraldehyde 3-phosphate and glycerone phosphate from D-glucose: step 4/4. Functionally, catalyzes the aldol condensation of dihydroxyacetone phosphate (DHAP or glycerone-phosphate) with glyceraldehyde 3-phosphate (G3P) to form fructose 1,6-bisphosphate (FBP) in gluconeogenesis and the reverse reaction in glycolysis. This is Fructose-bisphosphate aldolase (fba) from Streptococcus pneumoniae serotype 4 (strain ATCC BAA-334 / TIGR4).